The primary structure comprises 748 residues: Spidroin-1 (748 aa).

Tandem repeats lie at residues 1–25 (QGAG…GGQG), 26–38 (AGQG…GGQG), 39–66 (AGQG…GSQG), 67–96 (AGRG…GSQG), 97–130 (AGRG…GNQG), 131–158 (AGRG…GSQG), 159–191 (AGRG…GGQG), 192–204 (AGQG…GSQG), 205–235 (AGRG…GGQG), 236–262 (AGQG…GSQG), 263–292 (AGRG…GGQG), 293–305 (AGQG…GSQG), 306–333 (AGRG…GGQG), 334–360 (AGQG…GSQG), 361–394 (AGRG…GSQG), 395–424 (AGRG…GNQG), 425–458 (AGRG…GNQG), 459–485 (AGRG…GSQG), 486–512 (AGRG…RGQG), 513–525 (AGQG…GSQG), 526–555 (SGRG…GGQG), 556–582 (AGQG…GSQG), 583–612 (AGRG…GGQG), 613–642 (VGRG…VGSG), and 643–655 (ASAA…RLSS). Positions 1 to 655 (QGAGAAAAAA…ASAAASRLSS (655 aa)) are 25 X approximate tandem repeats.

It belongs to the silk fibroin family. As to quaternary structure, major subunit, with spidroin 2, of the dragline silk.

The protein resides in the secreted. It localises to the extracellular space. Its function is as follows. Spiders' major ampullate silk possesses unique characteristics of strength and elasticity. Fibroin consists of pseudocrystalline regions of antiparallel beta-sheet interspersed with elastic amorphous segments. In Trichonephila clavipes (Golden silk orbweaver), this protein is Spidroin-1.